Consider the following 130-residue polypeptide: Mediator of RNA polymerase II transcription subunit 31 (130 aa).

This sequence belongs to the Mediator complex subunit 31 family. As to quaternary structure, component of the Mediator complex.

It is found in the nucleus. Component of the Mediator complex, a coactivator involved in the regulated transcription of nearly all RNA polymerase II-dependent genes. Mediator functions as a bridge to convey information from gene-specific regulatory proteins to the basal RNA polymerase II transcription machinery. Mediator is recruited to promoters by direct interactions with regulatory proteins and serves as a scaffold for the assembly of a functional preinitiation complex with RNA polymerase II and the general transcription factors. The polypeptide is Mediator of RNA polymerase II transcription subunit 31 (SOH1) (Candida glabrata (strain ATCC 2001 / BCRC 20586 / JCM 3761 / NBRC 0622 / NRRL Y-65 / CBS 138) (Yeast)).